We begin with the raw amino-acid sequence, 245 residues long: tRNA (guanine-N(7)-)-methyltransferase (245 aa).

Residues Glu69, Glu94, Asp121, and Asp144 each contribute to the S-adenosyl-L-methionine site. The active site involves Asp144. Substrate contacts are provided by residues Lys148, Asp180, and 217-220; that span reads TKFE. Residues 200–225 are disordered; sequence NLSSSGDYVPRPENRPKTKFERRGEG. The span at 209-225 shows a compositional bias: basic and acidic residues; that stretch reads PRPENRPKTKFERRGEG.

Belongs to the class I-like SAM-binding methyltransferase superfamily. TrmB family.

The catalysed reaction is guanosine(46) in tRNA + S-adenosyl-L-methionine = N(7)-methylguanosine(46) in tRNA + S-adenosyl-L-homocysteine. It functions in the pathway tRNA modification; N(7)-methylguanine-tRNA biosynthesis. In terms of biological role, catalyzes the formation of N(7)-methylguanine at position 46 (m7G46) in tRNA. The polypeptide is tRNA (guanine-N(7)-)-methyltransferase (Idiomarina loihiensis (strain ATCC BAA-735 / DSM 15497 / L2-TR)).